Reading from the N-terminus, the 207-residue chain is ATP phosphoribosyltransferase (207 aa).

This sequence belongs to the ATP phosphoribosyltransferase family. Short subfamily. In terms of assembly, heteromultimer composed of HisG and HisZ subunits.

Its subcellular location is the cytoplasm. The enzyme catalyses 1-(5-phospho-beta-D-ribosyl)-ATP + diphosphate = 5-phospho-alpha-D-ribose 1-diphosphate + ATP. It functions in the pathway amino-acid biosynthesis; L-histidine biosynthesis; L-histidine from 5-phospho-alpha-D-ribose 1-diphosphate: step 1/9. Its function is as follows. Catalyzes the condensation of ATP and 5-phosphoribose 1-diphosphate to form N'-(5'-phosphoribosyl)-ATP (PR-ATP). Has a crucial role in the pathway because the rate of histidine biosynthesis seems to be controlled primarily by regulation of HisG enzymatic activity. In Dictyoglomus thermophilum (strain ATCC 35947 / DSM 3960 / H-6-12), this protein is ATP phosphoribosyltransferase.